The chain runs to 514 residues: Peptide chain release factor 3 (514 aa).

In terms of domain architecture, tr-type G spans 8–268 (KKRRTFAIIS…IFLKFAPEPH (261 aa)). Residues 17-24 (SHPDAGKT), 85-89 (DTPGH), and 139-142 (NKLD) each bind GTP.

Belongs to the TRAFAC class translation factor GTPase superfamily. Classic translation factor GTPase family. PrfC subfamily.

It is found in the cytoplasm. In terms of biological role, increases the formation of ribosomal termination complexes and stimulates activities of RF-1 and RF-2. It binds guanine nucleotides and has strong preference for UGA stop codons. It may interact directly with the ribosome. The stimulation of RF-1 and RF-2 is significantly reduced by GTP and GDP, but not by GMP. The protein is Peptide chain release factor 3 of Streptococcus pneumoniae (strain CGSP14).